The following is a 547-amino-acid chain: Vacuolar fusion protein MON1 homolog B (547 aa).

M1 is subject to N-acetylmethionine. Low complexity predominate over residues 1–15; it reads MEVGGDTAAPAPGGA. Residues 1–106 are disordered; sequence MEVGGDTAAP…GGDPSDEEWR (106 aa). Residues S59 and S61 each carry the phosphoserine modification.

The protein belongs to the MON1/SAND family. As to quaternary structure, interacts with CCNT2; down-regulates CCNT2-mediated activation of viral promoters during herpes simplex virus 1/HHV-1 infection. Found in a complex with RMC1, CCZ1 MON1A and MON1B.

In Homo sapiens (Human), this protein is Vacuolar fusion protein MON1 homolog B (MON1B).